Consider the following 619-residue polypeptide: Transcription factor 7-like 2 (619 aa).

Residues 1–11 (MPQLNGGGGDD) show a composition bias toward gly residues. The tract at residues 1–53 (MPQLNGGGGDDLGANDELISFKDEGEQEEKSSENSSAERDLADVKSSLVNESE) is CTNNB1-binding. Positions 1–96 (MPQLNGGGGD…AKRQDGGLFK (96 aa)) are disordered. Over residues 19 to 43 (ISFKDEGEQEEKSSENSSAERDLAD) the composition is skewed to basic and acidic residues. Lysine 22 participates in a covalent cross-link: Glycyl lysine isopeptide (Lys-Gly) (interchain with G-Cter in SUMO2). Residues 47–57 (SLVNESETNQN) are compositionally biased toward polar residues. Positions 63–91 (EAERRPPPRSESFRDKSRESLEEAAKRQD) are enriched in basic and acidic residues. Phosphothreonine; by NLK is present on residues threonine 201 and threonine 212. Residues 201–395 (TPLITYSNEH…RRWHALSREE (195 aa)) form a mediates interaction with MAD2L2 region. The segment covering 318–328 (TVKQESSQSDV) has biased composition (polar residues). 4 disordered regions span residues 318–350 (TVKQ…KPHI), 420–441 (RDNY…TNEH), 496–547 (CLSP…AHLS), and 574–619 (DLPP…KSLE). A Glycyl lysine isopeptide (Lys-Gly) (interchain with G-Cter in SUMO) cross-link involves residue lysine 320. Positions 335–346 (KHQDSKKEEEKK) are enriched in basic and acidic residues. The HMG box DNA-binding region spans 350–418 (IKKPLNAFML…LHMQLYPGWS (69 aa)). Residues 425–430 (KKKKRK) carry the Nuclear localization signal motif. The interval 459 to 505 (SAPKKCRARFGLDQQNNWCGPCRRKKKCVRYIQGEGSCLSPPSSDGS) is promoter-specific activation domain. Positions 496–508 (CLSPPSSDGSLLD) are enriched in low complexity. A Glycyl lysine isopeptide (Lys-Gly) (interchain with G-Cter in SUMO2) cross-link involves residue lysine 539. Low complexity predominate over residues 574–603 (DLPPAALQPAAPSSSIAQPSTSSLHSHSSL). Over residues 604 to 619 (AGTQPQPLSLVTKSLE) the composition is skewed to polar residues.

This sequence belongs to the TCF/LEF family. In terms of assembly, interacts with TGFB1I1. Interacts with CTNNB1 (via the armadillo repeat); forms stable transcription complex. Interacts with EP300. Interacts with NLK. Interacts with CCDC85B (probably through the HMG box); prevents interaction with CTNNB1. Interacts with TNIK. Interacts with MAD2L2; prevents TCF7L2/TCF4 binding to promZIPK/DAPK3oters, negatively modulating its transcriptional activity. Interacts with ZIPK/DAPK3. Interacts with XIAP/BIRC4 and TLE3. Interacts with DDIT3/CHOP. The CTNNB1 and TCF7L2/TCF4 complex interacts with PML (isoform PML-4). Identified in a complex with CTNNB1 and FERMT2. Interacts with SPIN1. Interacts with C11orf84/SPINDOC in a SPIN1-dependent manner. Interacts with DAZAP2; the interaction results in localization of DAZAP2 to the nucleus. In vitro, phosphorylated by TNIK. Post-translationally, phosphorylated at Thr-201 and/or Thr-212 by NLK. Phosphorylation by NLK at these sites inhibits DNA-binding by TCF7L2/TCF4, thereby preventing transcriptional activation of target genes of the canonical Wnt/beta-catenin signaling pathway. In terms of processing, polysumoylated. Sumoylation is enhanced by PIAS family members and desumoylation is enhanced by SENP2. Sumoylation/desumoylation regulates TCF7L2/TCF4 transcription activity in the Wnt/beta-catenin signaling pathway without altering interaction with CTNNB1 nor binding to DNA. In terms of tissue distribution, detected in epithelium from small intestine, with the highest expression at the top of the crypts and a gradient of expression from crypt to villus. Detected in colon epithelium and colon cancer, and in epithelium from mammary gland and carcinomas derived therefrom.

Its subcellular location is the nucleus. The protein resides in the PML body. In terms of biological role, participates in the Wnt signaling pathway and modulates MYC expression by binding to its promoter in a sequence-specific manner. Acts as a repressor in the absence of CTNNB1, and as activator in its presence. Activates transcription from promoters with several copies of the Tcf motif 5'-CCTTTGATC-3' in the presence of CTNNB1. TLE1, TLE2, TLE3 and TLE4 repress transactivation mediated by TCF7L2/TCF4 and CTNNB1. Expression of dominant-negative mutants results in cell-cycle arrest in G1. Necessary for the maintenance of the epithelial stem-cell compartment of the small intestine. The protein is Transcription factor 7-like 2 (TCF7L2) of Homo sapiens (Human).